We begin with the raw amino-acid sequence, 343 residues long: Uroporphyrinogen decarboxylase (343 aa).

Residues 25–29 (RQAGR), aspartate 75, tyrosine 152, serine 207, and histidine 323 contribute to the substrate site.

The protein belongs to the uroporphyrinogen decarboxylase family. As to quaternary structure, homodimer.

The protein resides in the cytoplasm. It catalyses the reaction uroporphyrinogen III + 4 H(+) = coproporphyrinogen III + 4 CO2. It functions in the pathway porphyrin-containing compound metabolism; protoporphyrin-IX biosynthesis; coproporphyrinogen-III from 5-aminolevulinate: step 4/4. Catalyzes the decarboxylation of four acetate groups of uroporphyrinogen-III to yield coproporphyrinogen-III. The protein is Uroporphyrinogen decarboxylase of Jannaschia sp. (strain CCS1).